The sequence spans 111 residues: Large ribosomal subunit protein eL31 (111 aa).

This sequence belongs to the eukaryotic ribosomal protein eL31 family.

This is Large ribosomal subunit protein eL31 (RPL31) from Encephalitozoon cuniculi (strain GB-M1) (Microsporidian parasite).